Reading from the N-terminus, the 919-residue chain is 2-oxoadipate dehydrogenase complex component E1 (919 aa).

An N6-succinyllysine mark is found at lysine 183 and lysine 188. A disordered region spans residues 299-320 (GKTRGRQQSRQDGDYSPDNSAQ). N6-succinyllysine occurs at positions 800 and 818.

The protein belongs to the alpha-ketoglutarate dehydrogenase family. As to quaternary structure, the 2-oxoadipate dehydrogenase complex is composed of OADH (2-oxoadipate dehydrogenase; E1a), DLST (dihydrolipoamide succinyltransferase; E2) and DLD (dihydrolipoamide dehydrogenase; E3). E1a functional unit is a dimer. Interacts with DLST. Requires thiamine diphosphate as cofactor.

It is found in the mitochondrion. It carries out the reaction N(6)-[(R)-lipoyl]-L-lysyl-[protein] + 2-oxoadipate + H(+) = N(6)-[(R)-S(8)-glutaryldihydrolipoyl]-L-lysyl-[protein] + CO2. Its pathway is amino-acid degradation. In terms of biological role, 2-oxoadipate dehydrogenase (E1a) component of the 2-oxoadipate dehydrogenase complex (OADHC). Participates in the first step, rate limiting for the overall conversion of 2-oxoadipate (alpha-ketoadipate) to glutaryl-CoA and CO(2) catalyzed by the whole OADHC. Catalyzes the irreversible decarboxylation of 2-oxoadipate via the thiamine diphosphate (ThDP) cofactor and subsequent transfer of the decarboxylated acyl intermediate on an oxidized dihydrolipoyl group that is covalently amidated to the E2 enzyme (dihydrolipoyllysine-residue succinyltransferase or DLST). Can catalyze the decarboxylation of 2-oxoglutarate in vitro, but at a much lower rate than 2-oxoadipate. Responsible for the last step of L-lysine, L-hydroxylysine and L-tryptophan catabolism with the common product being 2-oxoadipate. The sequence is that of 2-oxoadipate dehydrogenase complex component E1 (DHTKD1) from Homo sapiens (Human).